Reading from the N-terminus, the 375-residue chain is Esterase AN6793 (375 aa).

The interval 138 to 158 is disordered; the sequence is RHPQPGLDPGHGHRHKRMPPL.

It belongs to the sidJ hydrolase family. Homodimer.

Its pathway is secondary metabolite biosynthesis. In terms of biological role, esterase; part of a cluster that mediates the biosynthesis of a yet undetermined secondary metabolite. With the HR-PKS AN6791, produces a pathway intermediate compound with molecular weight 258. This is Esterase AN6793 from Emericella nidulans (strain FGSC A4 / ATCC 38163 / CBS 112.46 / NRRL 194 / M139) (Aspergillus nidulans).